Here is a 163-residue protein sequence, read N- to C-terminus: uncharacterized protein (163 aa).

The disordered stretch occupies residues 1 to 54 (MGKSARLRRSQTSSPENVLLGKDSSDDPYRSDSETESNSSSGTESNMSSDSTTS). Residues 23 to 33 (DSSDDPYRSDS) show a composition bias toward basic and acidic residues. Low complexity predominate over residues 36-52 (ESNSSSGTESNMSSDST). Residues 69–143 (LRTELAEMEM…VEELESSTRE (75 aa)) are a coiled coil.

This is an uncharacterized protein from Arabidopsis thaliana (Mouse-ear cress).